The following is a 600-amino-acid chain: Proline--tRNA ligase (600 aa).

Belongs to the class-II aminoacyl-tRNA synthetase family. ProS type 1 subfamily. Homodimer.

It is found in the cytoplasm. It catalyses the reaction tRNA(Pro) + L-proline + ATP = L-prolyl-tRNA(Pro) + AMP + diphosphate. Catalyzes the attachment of proline to tRNA(Pro) in a two-step reaction: proline is first activated by ATP to form Pro-AMP and then transferred to the acceptor end of tRNA(Pro). As ProRS can inadvertently accommodate and process non-cognate amino acids such as alanine and cysteine, to avoid such errors it has two additional distinct editing activities against alanine. One activity is designated as 'pretransfer' editing and involves the tRNA(Pro)-independent hydrolysis of activated Ala-AMP. The other activity is designated 'posttransfer' editing and involves deacylation of mischarged Ala-tRNA(Pro). The misacylated Cys-tRNA(Pro) is not edited by ProRS. This Prochlorococcus marinus (strain AS9601) protein is Proline--tRNA ligase.